A 295-amino-acid chain; its full sequence is Reticulon-like protein 1 (295 aa).

The Cytoplasmic segment spans residues 1–50 (MSASAQHSQAQQQQQQKSCNCDLLLWRNPVQTGKYFGGSLLALLILKKVN). In terms of domain architecture, Reticulon spans 20–220 (NCDLLLWRNP…ISNLVKSKTA (201 aa)). Residues 51-73 (LITFFLKVAYTILFTTGSIEFVS) traverse the membrane as a helical segment. Residues 74 to 142 (KLFLGQGLIT…ALFLLHKFFS (69 aa)) lie on the Lumenal side of the membrane. A helical transmembrane segment spans residues 143 to 163 (WFSIWTIVFVADIFTFTLPVI). Over 164 to 295 (YHSYKHEIDA…LQNELEKNNA (132 aa)) the chain is Cytoplasmic. Phosphothreonine occurs at positions 186 and 219. The segment covering 219 to 235 (TAPVSSTAGPQTASTSK) has biased composition (polar residues). Residues 219–295 (TAPVSSTAGP…LQNELEKNNA (77 aa)) form a disordered region. S232 is modified (phosphoserine). Residues 265–295 (STTQEFNVDELSNELKKSTKNLQNELEKNNA) adopt a coiled-coil conformation.

As to quaternary structure, interacts with POM33.

The protein localises to the endoplasmic reticulum membrane. This is Reticulon-like protein 1 (RTN1) from Saccharomyces cerevisiae (strain ATCC 204508 / S288c) (Baker's yeast).